The following is a 77-amino-acid chain: Large ribosomal subunit protein bL28 (77 aa).

Residues 1–20 (MSRVCQVTGKGPVTGNNISH) form a disordered region.

This sequence belongs to the bacterial ribosomal protein bL28 family.

The polypeptide is Large ribosomal subunit protein bL28 (Pseudomonas fluorescens (strain Pf0-1)).